We begin with the raw amino-acid sequence, 331 residues long: DNA fragmentation factor subunit alpha (331 aa).

Met-1 carries the N-acetylmethionine modification. Positions 17–96 (PLKPCLLRRN…ALACNEKWIY (80 aa)) constitute a CIDE-N domain. Thr-243 carries the phosphothreonine modification. Residues 306 to 331 (LRNLSARRSPLPGEPQRPKRAKRDSS) form a disordered region.

In terms of assembly, heterodimer of DFFA and DFFB. Post-translationally, caspase-3 cleaves DFF45 at 2 sites to generate an active factor.

The protein localises to the cytoplasm. Inhibitor of the caspase-activated DNase (DFF40). The sequence is that of DNA fragmentation factor subunit alpha (Dffa) from Mus musculus (Mouse).